The following is a 276-amino-acid chain: Digeranylgeranylglyceryl phosphate synthase (276 aa).

A run of 7 helical transmembrane segments spans residues 14–34 (NCILAGIVGLLGSIVALGHFP), 40–60 (LLIFLVVTVGCAGGNTINDYF), 92–112 (FAVGLALAYMINIYAFILGVI), 146–166 (GAVAVEHLGLAGYLAICAFLV), 202–222 (VGVLFALLTVIASFLPVKASV), 224–244 (VGYYAMVPVDLLILYAAYLIL), and 256–276 (QKLLKMSIFLAVMAFLIAAIV).

This sequence belongs to the UbiA prenyltransferase family. DGGGP synthase subfamily. It depends on Mg(2+) as a cofactor.

Its subcellular location is the cell membrane. It carries out the reaction sn-3-O-(geranylgeranyl)glycerol 1-phosphate + (2E,6E,10E)-geranylgeranyl diphosphate = 2,3-bis-O-(geranylgeranyl)-sn-glycerol 1-phosphate + diphosphate. It functions in the pathway membrane lipid metabolism; glycerophospholipid metabolism. In terms of biological role, prenyltransferase that catalyzes the transfer of the geranylgeranyl moiety of geranylgeranyl diphosphate (GGPP) to the C2 hydroxyl of (S)-3-O-geranylgeranylglyceryl phosphate (GGGP). This reaction is the second ether-bond-formation step in the biosynthesis of archaeal membrane lipids. In Thermococcus onnurineus (strain NA1), this protein is Digeranylgeranylglyceryl phosphate synthase.